The sequence spans 491 residues: Fibrinogen beta chain (491 aa).

Residues 1-30 (MKRMVSWSFHKLKTMKHLLLLLLCVFLVKS) form the signal peptide. Gln-31 is subject to Pyrrolidone carboxylic acid. Residues 44–75 (RGHRPLDKKREEAPSLRPAPPPISGGGYRARP) are disordered. Positions 45–47 (GHR) are beta-chain polymerization, binding distal domain of another fibrin. Over residues 47-57 (RPLDKKREEAP) the composition is skewed to basic and acidic residues. Residues 157-222 (KRQKQVKDNE…ESDVSAQMEY (66 aa)) adopt a coiled-coil conformation. Disulfide bonds link Cys-231–Cys-316 and Cys-241–Cys-270. One can recognise a Fibrinogen C-terminal domain in the interval 232–488 (NIPVVSGKEC…KMSMKIRPFF (257 aa)). A glycan (N-linked (GlcNAc...) asparagine) is linked at Asn-394. Cys-424 and Cys-437 form a disulfide bridge.

Heterohexamer; disulfide linked. Contains 2 sets of 3 non-identical chains (alpha, beta and gamma). The 2 heterotrimers are in head to head conformation with the N-termini in a small central domain. Post-translationally, conversion of fibrinogen to fibrin is triggered by thrombin, which cleaves fibrinopeptides A and B from alpha and beta chains, and thus exposes the N-terminal polymerization sites responsible for the formation of the soft clot. The soft clot is converted into the hard clot by factor XIIIA which catalyzes the epsilon-(gamma-glutamyl)lysine cross-linking between gamma chains (stronger) and between alpha chains (weaker) of different monomers. Detected in blood plasma (at protein level).

It localises to the secreted. Cleaved by the protease thrombin to yield monomers which, together with fibrinogen alpha (FGA) and fibrinogen gamma (FGG), polymerize to form an insoluble fibrin matrix. Fibrin has a major function in hemostasis as one of the primary components of blood clots. In addition, functions during the early stages of wound repair to stabilize the lesion and guide cell migration during re-epithelialization. Was originally thought to be essential for platelet aggregation, based on in vitro studies using anticoagulated blood. However subsequent studies have shown that it is not absolutely required for thrombus formation in vivo. Enhances expression of SELP in activated platelets. Maternal fibrinogen is essential for successful pregnancy. Fibrin deposition is also associated with infection, where it protects against IFNG-mediated hemorrhage. May also facilitate the antibacterial immune response via both innate and T-cell mediated pathways. The protein is Fibrinogen beta chain (FGB) of Homo sapiens (Human).